A 296-amino-acid polypeptide reads, in one-letter code: Light-independent protochlorophyllide reductase iron-sulfur ATP-binding protein (296 aa).

Positions Met1 to Gly11 are enriched in basic and acidic residues. The interval Met1–Asp20 is disordered. Residues Gly39 to Thr44 and Lys68 each bind ATP. Residue Ser43 coordinates Mg(2+). [4Fe-4S] cluster contacts are provided by Cys124 and Cys158. Asn209–Arg210 is a binding site for ATP.

The protein belongs to the NifH/BchL/ChlL family. In terms of assembly, homodimer. Protochlorophyllide reductase is composed of three subunits; ChlL, ChlN and ChlB. [4Fe-4S] cluster is required as a cofactor.

It carries out the reaction chlorophyllide a + oxidized 2[4Fe-4S]-[ferredoxin] + 2 ADP + 2 phosphate = protochlorophyllide a + reduced 2[4Fe-4S]-[ferredoxin] + 2 ATP + 2 H2O. The protein operates within porphyrin-containing compound metabolism; chlorophyll biosynthesis (light-independent). Its function is as follows. Component of the dark-operative protochlorophyllide reductase (DPOR) that uses Mg-ATP and reduced ferredoxin to reduce ring D of protochlorophyllide (Pchlide) to form chlorophyllide a (Chlide). This reaction is light-independent. The L component serves as a unique electron donor to the NB-component of the complex, and binds Mg-ATP. The chain is Light-independent protochlorophyllide reductase iron-sulfur ATP-binding protein from Prochlorococcus marinus (strain NATL1A).